A 480-amino-acid polypeptide reads, in one-letter code: Argininosuccinate lyase (480 aa).

This sequence belongs to the lyase 1 family. Argininosuccinate lyase subfamily.

The protein localises to the cytoplasm. The catalysed reaction is 2-(N(omega)-L-arginino)succinate = fumarate + L-arginine. It functions in the pathway amino-acid biosynthesis; L-arginine biosynthesis; L-arginine from L-ornithine and carbamoyl phosphate: step 3/3. In Ruthia magnifica subsp. Calyptogena magnifica, this protein is Argininosuccinate lyase.